Consider the following 60-residue polypeptide: Large ribosomal subunit protein bL32 (60 aa).

This sequence belongs to the bacterial ribosomal protein bL32 family.

In Streptococcus suis (strain 05ZYH33), this protein is Large ribosomal subunit protein bL32.